Reading from the N-terminus, the 488-residue chain is Argininosuccinate lyase (488 aa).

The protein belongs to the lyase 1 family. Argininosuccinate lyase subfamily.

The protein localises to the cytoplasm. The enzyme catalyses 2-(N(omega)-L-arginino)succinate = fumarate + L-arginine. Its pathway is amino-acid biosynthesis; L-arginine biosynthesis; L-arginine from L-ornithine and carbamoyl phosphate: step 3/3. The chain is Argininosuccinate lyase from Corynebacterium jeikeium (strain K411).